A 115-amino-acid chain; its full sequence is uncharacterized protein (115 aa).

The interval 1-115 is disordered; sequence MGETWFLTPN…ARSPERTPSP (115 aa). Residues 7 to 17 show a composition bias toward polar residues; sequence LTPNGQSSPGS. Composition is skewed to low complexity over residues 60 to 70 and 91 to 107; these read ASCAPRATPRR and SASA…WPAR.

This is an uncharacterized protein from Human adenovirus C serotype 2 (HAdV-2).